The sequence spans 98 residues: MAPAASSAPRLLRAAMLLLLLVAAGRRAAGAPVVNELRCQCLQTLQGIHLKNIQSVKVTTPGPHCDQTEVIATLKTGQEVCLNPAAPMVKKIIDKMLN.

The signal sequence occupies residues 1 to 29; it reads MAPAASSAPRLLRAAMLLLLLVAAGRRAA. 2 disulfide bridges follow: Cys39–Cys65 and Cys41–Cys81.

It belongs to the intercrine alpha (chemokine CxC) family.

Its subcellular location is the secreted. The protein is Growth-regulated protein homolog gamma of Bos taurus (Bovine).